Reading from the N-terminus, the 296-residue chain is Protoheme IX farnesyltransferase 1 (296 aa).

The next 8 membrane-spanning stretches (helical) occupy residues 14–34 (IVLL…ALSA), 41–61 (LWDY…SSAL), 86–106 (IGEN…VVYA), 108–128 (FLLN…YVII), 141–161 (IVIG…AATG), 165–185 (LLGF…FWCL), 230–250 (AFGM…LMLV), and 274–294 (YLTI…PFPF).

The protein belongs to the UbiA prenyltransferase family. Protoheme IX farnesyltransferase subfamily.

Its subcellular location is the cell membrane. The enzyme catalyses heme b + (2E,6E)-farnesyl diphosphate + H2O = Fe(II)-heme o + diphosphate. It participates in porphyrin-containing compound metabolism; heme O biosynthesis; heme O from protoheme: step 1/1. In terms of biological role, converts heme B (protoheme IX) to heme O by substitution of the vinyl group on carbon 2 of heme B porphyrin ring with a hydroxyethyl farnesyl side group. The polypeptide is Protoheme IX farnesyltransferase 1 (Cenarchaeum symbiosum (strain A)).